The chain runs to 527 residues: Glutamate--cysteine ligase (527 aa).

The protein belongs to the glutamate--cysteine ligase type 1 family. Type 1 subfamily.

The catalysed reaction is L-cysteine + L-glutamate + ATP = gamma-L-glutamyl-L-cysteine + ADP + phosphate + H(+). Its pathway is sulfur metabolism; glutathione biosynthesis; glutathione from L-cysteine and L-glutamate: step 1/2. The protein is Glutamate--cysteine ligase of Bordetella parapertussis (strain 12822 / ATCC BAA-587 / NCTC 13253).